The chain runs to 147 residues: Hemoglobin subunit beta-2 (147 aa).

In terms of domain architecture, Globin spans 3 to 147 (HWTAEEKAAI…LVDGLSQGYN (145 aa)). The heme b site is built by His-64 and His-93.

This sequence belongs to the globin family. Heterotetramer of two alpha chains and two beta chains. As to expression, red blood cells.

Functionally, involved in oxygen transport from the lung to the various peripheral tissues. This chain is Hemoglobin subunit beta-2 (hbb2), found in Xenopus laevis (African clawed frog).